The primary structure comprises 22 residues: Phospholipase A2 (22 aa).

This sequence belongs to the phospholipase A2 family. Group II subfamily. Ca(2+) is required as a cofactor. Post-translationally, seven disulfide bonds are present. Expressed by the venom gland.

It is found in the secreted. The enzyme catalyses a 1,2-diacyl-sn-glycero-3-phosphocholine + H2O = a 1-acyl-sn-glycero-3-phosphocholine + a fatty acid + H(+). In terms of biological role, snake venom phospholipase A2 (PLA2) that inhibits neuromuscular transmission by blocking acetylcholine release from the nerve termini. PLA2 catalyzes the calcium-dependent hydrolysis of the 2-acyl groups in 3-sn-phosphoglycerides. This chain is Phospholipase A2, found in Daboia siamensis (Eastern Russel's viper).